We begin with the raw amino-acid sequence, 529 residues long: uncharacterized protein (529 aa).

The active-site Nucleophile is the Asp-389. The active site involves Glu-392. The active-site Proton donor is the Asp-459.

The protein belongs to the glycosyl hydrolase 31 family.

This is an uncharacterized protein from Pseudescherichia vulneris (Escherichia vulneris).